The primary structure comprises 257 residues: 3-deoxy-manno-octulosonate cytidylyltransferase (257 aa).

It belongs to the KdsB family.

The protein resides in the cytoplasm. It carries out the reaction 3-deoxy-alpha-D-manno-oct-2-ulosonate + CTP = CMP-3-deoxy-beta-D-manno-octulosonate + diphosphate. Its pathway is nucleotide-sugar biosynthesis; CMP-3-deoxy-D-manno-octulosonate biosynthesis; CMP-3-deoxy-D-manno-octulosonate from 3-deoxy-D-manno-octulosonate and CTP: step 1/1. The protein operates within bacterial outer membrane biogenesis; lipopolysaccharide biosynthesis. Its function is as follows. Activates KDO (a required 8-carbon sugar) for incorporation into bacterial lipopolysaccharide in Gram-negative bacteria. This chain is 3-deoxy-manno-octulosonate cytidylyltransferase, found in Chromohalobacter salexigens (strain ATCC BAA-138 / DSM 3043 / CIP 106854 / NCIMB 13768 / 1H11).